Reading from the N-terminus, the 361-residue chain is Phosphoserine aminotransferase (361 aa).

Arg-42 is a binding site for L-glutamate. Pyridoxal 5'-phosphate-binding positions include 76–77 (AT), Trp-102, Thr-152, Asp-172, and Gln-195. At Lys-196 the chain carries N6-(pyridoxal phosphate)lysine. 237-238 (NT) is a binding site for pyridoxal 5'-phosphate.

This sequence belongs to the class-V pyridoxal-phosphate-dependent aminotransferase family. SerC subfamily. Homodimer. Pyridoxal 5'-phosphate is required as a cofactor.

It localises to the cytoplasm. It carries out the reaction O-phospho-L-serine + 2-oxoglutarate = 3-phosphooxypyruvate + L-glutamate. The enzyme catalyses 4-(phosphooxy)-L-threonine + 2-oxoglutarate = (R)-3-hydroxy-2-oxo-4-phosphooxybutanoate + L-glutamate. Its pathway is amino-acid biosynthesis; L-serine biosynthesis; L-serine from 3-phospho-D-glycerate: step 2/3. It participates in cofactor biosynthesis; pyridoxine 5'-phosphate biosynthesis; pyridoxine 5'-phosphate from D-erythrose 4-phosphate: step 3/5. Its function is as follows. Catalyzes the reversible conversion of 3-phosphohydroxypyruvate to phosphoserine and of 3-hydroxy-2-oxo-4-phosphonooxybutanoate to phosphohydroxythreonine. The protein is Phosphoserine aminotransferase of Xanthomonas euvesicatoria pv. vesicatoria (strain 85-10) (Xanthomonas campestris pv. vesicatoria).